The chain runs to 466 residues: Asparagine--tRNA ligase (466 aa).

It belongs to the class-II aminoacyl-tRNA synthetase family. In terms of assembly, homodimer.

The protein localises to the cytoplasm. The catalysed reaction is tRNA(Asn) + L-asparagine + ATP = L-asparaginyl-tRNA(Asn) + AMP + diphosphate + H(+). The polypeptide is Asparagine--tRNA ligase (Vibrio parahaemolyticus serotype O3:K6 (strain RIMD 2210633)).